A 173-amino-acid polypeptide reads, in one-letter code: CKLF-like MARVEL transmembrane domain-containing protein 8 (173 aa).

In terms of domain architecture, MARVEL spans 36-168; the sequence is FLRTPPGLLI…NTYFSFIAWR (133 aa). 4 consecutive transmembrane segments (helical) span residues 41-61, 70-90, 105-125, and 147-167; these read PGLL…LIAG, FGWV…FLIV, TTVG…AAIV, and FFAF…FIAW.

This sequence belongs to the chemokine-like factor family.

The protein localises to the membrane. The sequence is that of CKLF-like MARVEL transmembrane domain-containing protein 8 (Cmtm8) from Mus musculus (Mouse).